Here is a 95-residue protein sequence, read N- to C-terminus: Co-chaperonin GroES (95 aa).

Belongs to the GroES chaperonin family. As to quaternary structure, heptamer of 7 subunits arranged in a ring. Interacts with the chaperonin GroEL.

It is found in the cytoplasm. In terms of biological role, together with the chaperonin GroEL, plays an essential role in assisting protein folding. The GroEL-GroES system forms a nano-cage that allows encapsulation of the non-native substrate proteins and provides a physical environment optimized to promote and accelerate protein folding. GroES binds to the apical surface of the GroEL ring, thereby capping the opening of the GroEL channel. The chain is Co-chaperonin GroES from Cereibacter sphaeroides (strain KD131 / KCTC 12085) (Rhodobacter sphaeroides).